Consider the following 314-residue polypeptide: tRNA-cytidine(32) 2-sulfurtransferase (314 aa).

The short motif at 49–54 is the PP-loop motif element; it reads SGGKDS. 3 residues coordinate [4Fe-4S] cluster: Cys124, Cys127, and Cys215.

It belongs to the TtcA family. In terms of assembly, homodimer. The cofactor is Mg(2+). Requires [4Fe-4S] cluster as cofactor.

Its subcellular location is the cytoplasm. It carries out the reaction cytidine(32) in tRNA + S-sulfanyl-L-cysteinyl-[cysteine desulfurase] + AH2 + ATP = 2-thiocytidine(32) in tRNA + L-cysteinyl-[cysteine desulfurase] + A + AMP + diphosphate + H(+). Its pathway is tRNA modification. Functionally, catalyzes the ATP-dependent 2-thiolation of cytidine in position 32 of tRNA, to form 2-thiocytidine (s(2)C32). The sulfur atoms are provided by the cysteine/cysteine desulfurase (IscS) system. The sequence is that of tRNA-cytidine(32) 2-sulfurtransferase from Histophilus somni (strain 129Pt) (Haemophilus somnus).